A 457-amino-acid chain; its full sequence is Asparagine--tRNA ligase (457 aa).

The protein belongs to the class-II aminoacyl-tRNA synthetase family. In terms of assembly, homodimer.

Its subcellular location is the cytoplasm. The catalysed reaction is tRNA(Asn) + L-asparagine + ATP = L-asparaginyl-tRNA(Asn) + AMP + diphosphate + H(+). The chain is Asparagine--tRNA ligase from Phytoplasma australiense.